A 506-amino-acid chain; its full sequence is Cobyric acid synthase (506 aa).

One can recognise a GATase cobBQ-type domain in the interval 251–448; the sequence is DITIAIVQLP…LHGLFDSDAF (198 aa). Cys332 serves as the catalytic Nucleophile. His440 is a catalytic residue.

It belongs to the CobB/CobQ family. CobQ subfamily.

It participates in cofactor biosynthesis; adenosylcobalamin biosynthesis. Catalyzes amidations at positions B, D, E, and G on adenosylcobyrinic A,C-diamide. NH(2) groups are provided by glutamine, and one molecule of ATP is hydrogenolyzed for each amidation. This Salmonella choleraesuis (strain SC-B67) protein is Cobyric acid synthase.